Reading from the N-terminus, the 534-residue chain is uncharacterized protein (534 aa).

Residues 1-22 form the signal peptide; the sequence is MGLRLLFSLICVFCISNIFTQA. Asparagine 31 carries an N-linked (GlcNAc...) asparagine glycan. Disordered stretches follow at residues 70-145 and 176-418; these read PTYY…SSVS and SSLS…SSAP. An N-linked (GlcNAc...) asparagine glycan is attached at asparagine 426.

Its subcellular location is the endoplasmic reticulum. The protein resides in the cell membrane. This is an uncharacterized protein from Schizosaccharomyces pombe (strain 972 / ATCC 24843) (Fission yeast).